The sequence spans 362 residues: 3-dehydroquinate synthase (362 aa).

NAD(+)-binding positions include 70 to 75, 104 to 108, 128 to 129, Lys141, Lys150, and 168 to 171; these read DGEKYK, GVIGD, TT, and TLNT. Residues Glu183, His246, and His263 each coordinate Zn(2+).

Belongs to the sugar phosphate cyclases superfamily. Dehydroquinate synthase family. Co(2+) is required as a cofactor. It depends on Zn(2+) as a cofactor. NAD(+) serves as cofactor.

The protein localises to the cytoplasm. The enzyme catalyses 7-phospho-2-dehydro-3-deoxy-D-arabino-heptonate = 3-dehydroquinate + phosphate. It participates in metabolic intermediate biosynthesis; chorismate biosynthesis; chorismate from D-erythrose 4-phosphate and phosphoenolpyruvate: step 2/7. In terms of biological role, catalyzes the conversion of 3-deoxy-D-arabino-heptulosonate 7-phosphate (DAHP) to dehydroquinate (DHQ). The chain is 3-dehydroquinate synthase from Haemophilus influenzae (strain 86-028NP).